Reading from the N-terminus, the 1025-residue chain is Multidrug resistance protein MdtC (1025 aa).

The next 12 helical transmembrane spans lie at phenylalanine 3–leucine 23, glutamate 333–leucine 353, isoleucine 360–cysteine 380, leucine 387–leucine 407, valine 431–leucine 451, phenylalanine 463–proline 483, leucine 528–proline 548, valine 853–serine 873, valine 875–leucine 895, leucine 897–valine 917, proline 953–glycine 973, and isoleucine 984–valine 1004.

This sequence belongs to the resistance-nodulation-cell division (RND) (TC 2.A.6) family. MdtC subfamily. In terms of assembly, part of a tripartite efflux system composed of MdtA, MdtB and MdtC. MdtC forms a heteromultimer with MdtB.

Its subcellular location is the cell inner membrane. In terms of biological role, the MdtABC tripartite complex confers resistance against novobiocin and deoxycholate. This chain is Multidrug resistance protein MdtC, found in Escherichia coli O17:K52:H18 (strain UMN026 / ExPEC).